The primary structure comprises 436 residues: GTPase Der (436 aa).

2 EngA-type G domains span residues 4 to 167 (PVVA…PKDH) and 176 to 351 (IKFC…DNHA). GTP is bound by residues 10-17 (GRPNVGKS), 57-61 (DTGGI), 119-122 (NKID), 182-189 (GRPNVGKS), 229-233 (DTAGM), and 294-297 (NKWD). The 85-residue stretch at 352–436 (MRVQTNVLNE…PIKIIARPRK (85 aa)) folds into the KH-like domain.

This sequence belongs to the TRAFAC class TrmE-Era-EngA-EngB-Septin-like GTPase superfamily. EngA (Der) GTPase family. Associates with the 50S ribosomal subunit.

Functionally, GTPase that plays an essential role in the late steps of ribosome biogenesis. The chain is GTPase Der from Geobacillus thermodenitrificans (strain NG80-2).